The sequence spans 414 residues: Cytochrome c biogenesis protein Ccs1 (414 aa).

3 consecutive transmembrane segments (helical) span residues L14 to I34, S73 to T93, and V159 to T179.

The protein belongs to the Ccs1/CcsB family. May interact with CcsA.

The protein resides in the plastid. Its subcellular location is the chloroplast thylakoid membrane. Functionally, required during biogenesis of c-type cytochromes (cytochrome c6 and cytochrome f) at the step of heme attachment. This is Cytochrome c biogenesis protein Ccs1 from Guillardia theta (Cryptophyte).